The following is a 511-amino-acid chain: GMP synthase [glutamine-hydrolyzing] (511 aa).

One can recognise a Glutamine amidotransferase type-1 domain in the interval 5-195; it reads AILVLDFGSQ…VFKICQAQIN (191 aa). Cys82 functions as the Nucleophile in the catalytic mechanism. Active-site residues include His169 and Glu171. Positions 196–386 constitute a GMPS ATP-PPase domain; it reads WSLEGNLETI…LGIKKESLYR (191 aa). 223-229 contributes to the ATP binding site; it reads SGGTDSL.

As to quaternary structure, homodimer.

It carries out the reaction XMP + L-glutamine + ATP + H2O = GMP + L-glutamate + AMP + diphosphate + 2 H(+). The protein operates within purine metabolism; GMP biosynthesis; GMP from XMP (L-Gln route): step 1/1. In terms of biological role, catalyzes the synthesis of GMP from XMP. The polypeptide is GMP synthase [glutamine-hydrolyzing] (guaA) (Borreliella burgdorferi (strain ATCC 35210 / DSM 4680 / CIP 102532 / B31) (Borrelia burgdorferi)).